The following is a 514-amino-acid chain: Ribonuclease Y (514 aa).

A helical transmembrane segment spans residues 2–22; that stretch reads EDLIVAIVVGAFSSAISIFVV. The 65-residue stretch at 204–268 folds into the KH domain; it reads LINNIPLNDE…VATKTIRELL (65 aa). Residues 330 to 423 form the HD domain; sequence ALAHTLEVAH…VCAADALSAA (94 aa).

The protein belongs to the RNase Y family.

It is found in the cell membrane. Functionally, endoribonuclease that initiates mRNA decay. This is Ribonuclease Y from Aliarcobacter butzleri (strain RM4018) (Arcobacter butzleri).